Here is a 376-residue protein sequence, read N- to C-terminus: MAIKVLVVDDSSFFRRRVSEIINSDPRLEVIDVAVNGKEAVEKAKSLKPDVITMDIEMPVMDGISAVREIMKACPTPTLMFSSLTHDGAKATLDALDAGALDFLPKKFEDIARNRDEAVSLLQKRIAEIARKKSFMRRPVLSSQSTSTVESRTATTRTATSALTASPVKAAPAAPIAQRFKATGKKYQLTAIGTSTGGPVALQKILTAIPANYPHPIILVQHMPATFTAAFAARLNNLCKIQVKEAEDGDVLKPGCAYLAPGGLQMMVDGRPGASRLKILDGGERMNYKPCVDVTFGSAAKVYGDKVLSMILTGMGADGREGCRMLKAGGATIWSQDEQSCVVYGMPQAVDKAGLSSESLPLDRIAERMLVEVGLK.

The 118-residue stretch at 4 to 121 (KVLVVDDSSF…ARNRDEAVSL (118 aa)) folds into the Response regulatory domain. Residue D55 is modified to 4-aspartylphosphate. Positions 142-161 (SSQSTSTVESRTATTRTATS) are disordered. The span at 145-161 (STSTVESRTATTRTATS) shows a compositional bias: low complexity. Residues 183–376 (TGKKYQLTAI…ERMLVEVGLK (194 aa)) form the CheB-type methylesterase domain. Active-site residues include S195, H222, and D318.

Belongs to the CheB family. Phosphorylated by CheA. Phosphorylation of the N-terminal regulatory domain activates the methylesterase activity.

It is found in the cytoplasm. It carries out the reaction [protein]-L-glutamate 5-O-methyl ester + H2O = L-glutamyl-[protein] + methanol + H(+). The enzyme catalyses L-glutaminyl-[protein] + H2O = L-glutamyl-[protein] + NH4(+). Involved in chemotaxis. Part of a chemotaxis signal transduction system that modulates chemotaxis in response to various stimuli. Catalyzes the demethylation of specific methylglutamate residues introduced into the chemoreceptors (methyl-accepting chemotaxis proteins or MCP) by CheR. Also mediates the irreversible deamidation of specific glutamine residues to glutamic acid. The protein is Protein-glutamate methylesterase/protein-glutamine glutaminase of Aliivibrio fischeri (strain ATCC 700601 / ES114) (Vibrio fischeri).